The chain runs to 406 residues: Phosphorylase b kinase gamma catalytic chain, liver/testis isoform (406 aa).

The Protein kinase domain maps to 24–291 (YDPKDVIGRG…AEQALQHPFF (268 aa)). ATP is bound by residues 30–38 (IGRGVSSVV) and Lys-53. The active-site Proton acceptor is the Asp-153. Positions 306 to 330 (QRFRVAVWTVLAAGRVALSTHRVRP) are calmodulin-binding (domain-N). Residue Ser-345 is modified to Phosphoserine. The calmodulin-binding (domain-C) stretch occupies residues 346–370 (VRHLIDNCAFRLYGHWVKKGEQQNR).

It belongs to the protein kinase superfamily. CAMK Ser/Thr protein kinase family. As to quaternary structure, hexadecamer of 4 heterotetramers, each composed of alpha, beta, gamma, and delta subunits. Alpha (PHKA1 or PHKA2) and beta (PHKB) are regulatory subunits, gamma (PHKG1 or PHKG2) is the catalytic subunit, and delta is calmodulin.

The enzyme catalyses 2 ATP + phosphorylase b = 2 ADP + phosphorylase a.. In terms of biological role, catalytic subunit of the phosphorylase b kinase (PHK), which mediates the neural and hormonal regulation of glycogen breakdown (glycogenolysis) by phosphorylating and thereby activating glycogen phosphorylase. May regulate glycogeneolysis in the testis. In vitro, phosphorylates PYGM. The polypeptide is Phosphorylase b kinase gamma catalytic chain, liver/testis isoform (PHKG2) (Homo sapiens (Human)).